A 1368-amino-acid polypeptide reads, in one-letter code: DNA-directed RNA polymerase subunit beta (1368 aa).

It belongs to the RNA polymerase beta chain family. In terms of assembly, the RNAP catalytic core consists of 2 alpha, 1 beta, 1 beta' and 1 omega subunit. When a sigma factor is associated with the core the holoenzyme is formed, which can initiate transcription.

The enzyme catalyses RNA(n) + a ribonucleoside 5'-triphosphate = RNA(n+1) + diphosphate. In terms of biological role, DNA-dependent RNA polymerase catalyzes the transcription of DNA into RNA using the four ribonucleoside triphosphates as substrates. The protein is DNA-directed RNA polymerase subunit beta of Paraburkholderia phytofirmans (strain DSM 17436 / LMG 22146 / PsJN) (Burkholderia phytofirmans).